Reading from the N-terminus, the 341-residue chain is MKRSEFYFELPEELIAQEPLEDRASSRLMILNKKTGEIEHDIFKNITKYLKPGDCLVLNNTKVIPARLIGRREDSGGKIEFVLLKRISNNEWEILVKPGRRAKIGSKFVFGNGELIAEILDTTEVGGRIVRFYYEGVFEEVLDKLGEMPVPPYIKKKLKNKDRYQTVYAKYEGSAAAPTAGLHFTEELLEKIRQMGVKTVFITLHVGLGTFRPVKEEVIENHKMHEEFYIVTKEAAEEINETRKSGGRIIAVGTTSTRTLETVADEDGYIKEKSGWTDIFIYPGYKFKAIDGMITNFHLPESTLIMMVSAFAGKENIMRAYKIAVEKKYRFFSFGDAMLII.

The protein belongs to the QueA family. Monomer.

It is found in the cytoplasm. The enzyme catalyses 7-aminomethyl-7-carbaguanosine(34) in tRNA + S-adenosyl-L-methionine = epoxyqueuosine(34) in tRNA + adenine + L-methionine + 2 H(+). The protein operates within tRNA modification; tRNA-queuosine biosynthesis. Functionally, transfers and isomerizes the ribose moiety from AdoMet to the 7-aminomethyl group of 7-deazaguanine (preQ1-tRNA) to give epoxyqueuosine (oQ-tRNA). This Thermoanaerobacter sp. (strain X514) protein is S-adenosylmethionine:tRNA ribosyltransferase-isomerase.